We begin with the raw amino-acid sequence, 255 residues long: MNVLTIKGVSIGEGMPKIIIPLMGKTEKQILNEAEAVKLLNPDIVEWRVDVFEKANDREAVTKLISKLRKSLEDKLFLFTFRTHKEGGSMEMDESSYLALLESAIQTKDIDLIDIELFSGDANVKALVSLAEENNVYVVMSNHDFEKTPVKDEIISRLRKMQDLGAHIPKMAVMPNDTGDLLTLLDATYTMKTIYADRPIITMSMAATGLISRLSGEVFGSACTFGAGEEASAPGQIPVSELRSVLDILHKNTRG.

3-dehydroquinate-binding positions include 46–48 and Arg82; that span reads EWR. His143 (proton donor/acceptor) is an active-site residue. The Schiff-base intermediate with substrate role is filled by Lys170. 3 residues coordinate 3-dehydroquinate: Arg213, Ser232, and Gln236.

The protein belongs to the type-I 3-dehydroquinase family. Homodimer.

It carries out the reaction 3-dehydroquinate = 3-dehydroshikimate + H2O. Its pathway is metabolic intermediate biosynthesis; chorismate biosynthesis; chorismate from D-erythrose 4-phosphate and phosphoenolpyruvate: step 3/7. Functionally, involved in the third step of the chorismate pathway, which leads to the biosynthesis of aromatic amino acids. Catalyzes the cis-dehydration of 3-dehydroquinate (DHQ) and introduces the first double bond of the aromatic ring to yield 3-dehydroshikimate. The chain is 3-dehydroquinate dehydratase from Bacillus subtilis (strain 168).